The sequence spans 858 residues: DNA mismatch repair protein MutS (858 aa).

An ATP-binding site is contributed by 603-610 (GPNMSGKS).

The protein belongs to the DNA mismatch repair MutS family.

Its function is as follows. This protein is involved in the repair of mismatches in DNA. It is possible that it carries out the mismatch recognition step. This protein has a weak ATPase activity. The polypeptide is DNA mismatch repair protein MutS (Streptococcus agalactiae serotype Ia (strain ATCC 27591 / A909 / CDC SS700)).